The chain runs to 364 residues: Urease accessory protein UreD (364 aa).

2 disordered regions span residues 1–37 and 201–250; these read MDQD…SSPA and PPEV…AGER. Low complexity-rich tracts occupy residues 21–37, 209–218, and 236–248; these read AGSA…SSPA, APDRGAPAAE, and AASS…APAG.

The protein belongs to the UreD family. As to quaternary structure, ureD, UreF and UreG form a complex that acts as a GTP-hydrolysis-dependent molecular chaperone, activating the urease apoprotein by helping to assemble the nickel containing metallocenter of UreC. The UreE protein probably delivers the nickel.

It is found in the cytoplasm. Required for maturation of urease via the functional incorporation of the urease nickel metallocenter. This Kocuria rhizophila (strain ATCC 9341 / DSM 348 / NBRC 103217 / DC2201) protein is Urease accessory protein UreD.